A 420-amino-acid chain; its full sequence is Zinc finger and BTB domain-containing protein 42 (420 aa).

Residues 24–92 enclose the BTB domain; sequence CDCTVLVGDA…MYEGRLDLHS (69 aa). Disordered regions lie at residues 174–204 and 216–248; these read PPSW…HPPC and QGAQ…PPVC. A compositionally biased stretch (low complexity) spans 227-241; that stretch reads DSFSEQDSSSPQSAD. C2H2-type zinc fingers lie at residues 292 to 314, 332 to 354, 360 to 382, and 388 to 411; these read CICP…LSAH, PTCP…ERTH, YTCV…AVVH, and HACR…RKFH.

It belongs to the krueppel C2H2-type zinc-finger protein family. ZBTB18 subfamily.

The protein localises to the cytoplasm. It is found in the nucleus. It localises to the nucleoplasm. Functionally, transcriptional repressor. Specifically binds DNA and probably acts by recruiting chromatin remodeling multiprotein complexes. This Rattus norvegicus (Rat) protein is Zinc finger and BTB domain-containing protein 42 (Zbtb42).